An 87-amino-acid chain; its full sequence is Large ribosomal subunit protein bL27 (87 aa).

The segment at 1 to 22 (MAHKKGQGSVKNGRDSRSKRLG) is disordered.

Belongs to the bacterial ribosomal protein bL27 family.

This is Large ribosomal subunit protein bL27 from Akkermansia muciniphila (strain ATCC BAA-835 / DSM 22959 / JCM 33894 / BCRC 81048 / CCUG 64013 / CIP 107961 / Muc).